We begin with the raw amino-acid sequence, 827 residues long: Striatin homolog (827 aa).

Positions 37–109 (RAHWISEKAE…VEEEEEEDDK (73 aa)) form a coiled coil. Disordered stretches follow at residues 99–123 (KVEE…SKDN), 181–270 (KDIN…QLQS), 311–362 (SSVS…DEQS), and 400–459 (EEGN…SELM). A compositionally biased stretch (basic and acidic residues) spans 109–123 (KIPKNREPPKKSKDN). Composition is skewed to low complexity over residues 184-270 (NNNN…QLQS) and 311-334 (SSVS…TSKQ). Positions 337–346 (EDPNNVTISK) are enriched in polar residues. Low complexity-rich tracts occupy residues 347–356 (QQQQEQQQQQ), 416–432 (TPTT…STGS), and 439–453 (SSSS…NSNT). 6 WD repeats span residues 495–534 (SHFD…PTKK), 548–593 (GHTG…IDSY), 610–649 (GHQD…QLYT), 709–748 (NNNS…VVHS), 751–790 (AHSN…CIQD), and 797–827 (KYDE…RILN).

This sequence belongs to the WD repeat striatin family. As to quaternary structure, part of the core of STRIPAK complexes.

It is found in the cytoplasm. It localises to the membrane. Functionally, calmodulin-binding scaffolding protein which is the center of the striatin-interacting phosphatase and kinase (STRIPAK) complexes. STRIPAK complexes have critical roles in protein (de)phosphorylation and are regulators of multiple signaling pathways including Hippo, MAPK, nuclear receptor and cytoskeleton remodeling. Different types of STRIPAK complexes are involved in a variety of biological processes such as cell growth, differentiation, apoptosis, metabolism and immune regulation. The chain is Striatin homolog (strn) from Dictyostelium discoideum (Social amoeba).